A 142-amino-acid chain; its full sequence is Large ribosomal subunit protein uL22c (142 aa).

The protein belongs to the universal ribosomal protein uL22 family. Part of the 50S ribosomal subunit.

The protein localises to the plastid. The protein resides in the chloroplast. Its function is as follows. This protein binds specifically to 23S rRNA. The globular domain of the protein is located near the polypeptide exit tunnel on the outside of the subunit, while an extended beta-hairpin is found that lines the wall of the exit tunnel in the center of the 70S ribosome. The chain is Large ribosomal subunit protein uL22c (rpl22) from Picea abies (Norway spruce).